We begin with the raw amino-acid sequence, 356 residues long: Alanine racemase, catabolic (356 aa).

Lys35 acts as the Proton acceptor; specific for D-alanine in catalysis. Residue Lys35 is modified to N6-(pyridoxal phosphate)lysine. Arg130 is a binding site for substrate. Tyr253 functions as the Proton acceptor; specific for L-alanine in the catalytic mechanism. Met301 provides a ligand contact to substrate.

It belongs to the alanine racemase family. The cofactor is pyridoxal 5'-phosphate.

The catalysed reaction is L-alanine = D-alanine. In terms of biological role, isomerizes L-alanine to D-alanine which is then oxidized to pyruvate by DadA. The protein is Alanine racemase, catabolic (dadX) of Escherichia coli O6:H1 (strain CFT073 / ATCC 700928 / UPEC).